A 204-amino-acid polypeptide reads, in one-letter code: Urease accessory protein UreG (204 aa).

Residue 10–17 (GPVGAGKT) coordinates GTP.

It belongs to the SIMIBI class G3E GTPase family. UreG subfamily. Homodimer. UreD, UreF and UreG form a complex that acts as a GTP-hydrolysis-dependent molecular chaperone, activating the urease apoprotein by helping to assemble the nickel containing metallocenter of UreC. The UreE protein probably delivers the nickel.

The protein localises to the cytoplasm. Functionally, facilitates the functional incorporation of the urease nickel metallocenter. This process requires GTP hydrolysis, probably effectuated by UreG. This is Urease accessory protein UreG from Bacillus sp. (strain TB-90).